Here is a 413-residue protein sequence, read N- to C-terminus: Probable N-acetyltransferase HLS1-like (413 aa).

The N-acetyltransferase domain occupies 5–187; it reads VEVREYDPSK…VNPVYAHRVN (183 aa).

Belongs to the acetyltransferase family.

This is Probable N-acetyltransferase HLS1-like from Arabidopsis thaliana (Mouse-ear cress).